We begin with the raw amino-acid sequence, 494 residues long: Glycerol kinase (494 aa).

Thr12 serves as a coordination point for ADP. Thr12, Thr13, and Ser14 together coordinate ATP. Thr12 provides a ligand contact to sn-glycerol 3-phosphate. Arg16 contacts ADP. Residues Arg82, Glu83, Tyr134, and Asp243 each coordinate sn-glycerol 3-phosphate. Arg82, Glu83, Tyr134, Asp243, and Gln244 together coordinate glycerol. Positions 265 and 308 each coordinate ADP. 4 residues coordinate ATP: Thr265, Gly308, Gln312, and Gly408. Residues Gly408 and Asn412 each contribute to the ADP site.

The protein belongs to the FGGY kinase family.

It carries out the reaction glycerol + ATP = sn-glycerol 3-phosphate + ADP + H(+). It participates in polyol metabolism; glycerol degradation via glycerol kinase pathway; sn-glycerol 3-phosphate from glycerol: step 1/1. With respect to regulation, inhibited by fructose 1,6-bisphosphate (FBP). In terms of biological role, key enzyme in the regulation of glycerol uptake and metabolism. Catalyzes the phosphorylation of glycerol to yield sn-glycerol 3-phosphate. In Marinomonas sp. (strain MWYL1), this protein is Glycerol kinase.